The following is a 388-amino-acid chain: Chorismate synthase (388 aa).

NADP(+) contacts are provided by Arg39 and Arg45. FMN contacts are provided by residues 132–134 (RSS), 251–252 (NA), Gly296, 311–315 (KPIPT), and Arg337.

This sequence belongs to the chorismate synthase family. As to quaternary structure, homotetramer. It depends on FMNH2 as a cofactor.

The enzyme catalyses 5-O-(1-carboxyvinyl)-3-phosphoshikimate = chorismate + phosphate. It functions in the pathway metabolic intermediate biosynthesis; chorismate biosynthesis; chorismate from D-erythrose 4-phosphate and phosphoenolpyruvate: step 7/7. Its function is as follows. Catalyzes the anti-1,4-elimination of the C-3 phosphate and the C-6 proR hydrogen from 5-enolpyruvylshikimate-3-phosphate (EPSP) to yield chorismate, which is the branch point compound that serves as the starting substrate for the three terminal pathways of aromatic amino acid biosynthesis. This reaction introduces a second double bond into the aromatic ring system. The polypeptide is Chorismate synthase (Staphylococcus aureus (strain COL)).